Reading from the N-terminus, the 116-residue chain is Antimicrobial peptide 1b (116 aa).

The first 34 residues, 1-34 (MKPHMSATVLRAPRVAAILLAVVLAAVLATAVNG), serve as a signal peptide directing secretion. Residues 35–77 (AQRCGDQARGAKCPNCLCCGKYGFCGSGDAYCGAGSCQSQCRG) enclose the Chitin-binding type-1 domain. Intrachain disulfides connect C38-C53, C47-C59, C50-C78, C52-C66, and C71-C75. A propeptide spanning residues 80-116 (DDVVGQALPAEPGSTRATAASSASARGLNLTATTGGP) is cleaved from the precursor. The disordered stretch occupies residues 89–116 (AEPGSTRATAASSASARGLNLTATTGGP). Residues 93-105 (STRATAASSASAR) show a composition bias toward low complexity.

Its function is as follows. Binds chitin. Has antifungal activity against the fungi F.solani (IC(50)=5 ug/ml), F.verticillioides (IC(50)=30 ug/ml), F.oxysporum (IC(50)=5 ug/ml), B.sorokiniana (IC(50)=5 ug/ml), B.cinerea (IC(50)=20 ug/ml) and N.crassa (IC(50)=10 ug/ml). Inhibits hyphal elongation and causes browning of hyphae in F.oxysporum. Causes destruction and discoloration of spores in B.sorokiniana. Inhibits the development of disease caused by the fungus P.infestans on potato tubers. Has antibacterial activity against the Gram-negative bacteria P.syringae and E.carotovora, and the Gram-positive bacterium C.michiganensis. Has antifungal activity against F.verticillioides (IC(50)=2.7 ug/ml). At concentrations between 45 uM and 225 uM, inhibits activity of metalloproteinase fungalysin Fv-cpm from F.verticillioides. In Triticum kiharae (Wheat), this protein is Antimicrobial peptide 1b.